The chain runs to 165 residues: Dihydrofolate reductase type A13 (165 aa).

Residues 7 to 162 (RIYLVAAMGA…ITYTHSVYAR (156 aa)) enclose the DHFR domain.

This sequence belongs to the dihydrofolate reductase family. As to quaternary structure, homodimer.

It carries out the reaction (6S)-5,6,7,8-tetrahydrofolate + NADP(+) = 7,8-dihydrofolate + NADPH + H(+). It participates in cofactor biosynthesis; tetrahydrofolate biosynthesis; 5,6,7,8-tetrahydrofolate from 7,8-dihydrofolate: step 1/1. Functionally, key enzyme in folate metabolism. Catalyzes an essential reaction for de novo glycine and purine synthesis, and for DNA precursor synthesis. The chain is Dihydrofolate reductase type A13 (dfrA13) from Escherichia coli.